The following is a 592-amino-acid chain: Putative D-/L-hydantoinase subunit B (592 aa).

The protein belongs to the HyuB family. In terms of assembly, may form a complex with HyuA.

Involved in the asymmetric conversion of racemic 5-substituted hydantoins to the corresponding L-amino acids. HyuA and HyuB are both required for the conversion of D- and L-5-substituted hydantoins to corresponding N-carbamoyl-D- and N-carbamoyl-L-amino acids, respectively. The protein is Putative D-/L-hydantoinase subunit B of Pseudomonas sp. (strain NS671).